Reading from the N-terminus, the 304-residue chain is N-acetylmuramic acid 6-phosphate etherase (304 aa).

In terms of domain architecture, SIS spans 62-225 (IVTAFRQGGR…TTASMILMGK (164 aa)). Glu90 functions as the Proton donor in the catalytic mechanism. The active site involves Glu121.

It belongs to the GCKR-like family. MurNAc-6-P etherase subfamily. As to quaternary structure, homodimer.

The catalysed reaction is N-acetyl-D-muramate 6-phosphate + H2O = N-acetyl-D-glucosamine 6-phosphate + (R)-lactate. Its pathway is amino-sugar metabolism; 1,6-anhydro-N-acetylmuramate degradation. It functions in the pathway amino-sugar metabolism; N-acetylmuramate degradation. The protein operates within cell wall biogenesis; peptidoglycan recycling. Functionally, specifically catalyzes the cleavage of the D-lactyl ether substituent of MurNAc 6-phosphate, producing GlcNAc 6-phosphate and D-lactate. Together with AnmK, is also required for the utilization of anhydro-N-acetylmuramic acid (anhMurNAc) either imported from the medium or derived from its own cell wall murein, and thus plays a role in cell wall recycling. In Actinobacillus succinogenes (strain ATCC 55618 / DSM 22257 / CCUG 43843 / 130Z), this protein is N-acetylmuramic acid 6-phosphate etherase.